Reading from the N-terminus, the 272-residue chain is Shikimate dehydrogenase (NADP(+)) (272 aa).

Residues 14–16 (SKS) and threonine 61 contribute to the shikimate site. Catalysis depends on lysine 65, which acts as the Proton acceptor. Residues asparagine 86 and aspartate 102 each coordinate shikimate. NADP(+)-binding positions include 126–130 (GAGGA), 150–155 (NRTASK), and methionine 214. Residue tyrosine 216 coordinates shikimate. Glycine 239 serves as a coordination point for NADP(+).

The protein belongs to the shikimate dehydrogenase family. As to quaternary structure, homodimer.

It carries out the reaction shikimate + NADP(+) = 3-dehydroshikimate + NADPH + H(+). It functions in the pathway metabolic intermediate biosynthesis; chorismate biosynthesis; chorismate from D-erythrose 4-phosphate and phosphoenolpyruvate: step 4/7. Involved in the biosynthesis of the chorismate, which leads to the biosynthesis of aromatic amino acids. Catalyzes the reversible NADPH linked reduction of 3-dehydroshikimate (DHSA) to yield shikimate (SA). The protein is Shikimate dehydrogenase (NADP(+)) of Pseudoalteromonas atlantica (strain T6c / ATCC BAA-1087).